The following is a 206-amino-acid chain: LexA repressor (206 aa).

The H-T-H motif DNA-binding region spans 28–48; the sequence is VREIGEAVGLASSSTVHGHLA. Catalysis depends on for autocatalytic cleavage activity residues Ser128 and Lys166.

This sequence belongs to the peptidase S24 family. As to quaternary structure, homodimer.

It catalyses the reaction Hydrolysis of Ala-|-Gly bond in repressor LexA.. Its function is as follows. Represses a number of genes involved in the response to DNA damage (SOS response), including recA and lexA. In the presence of single-stranded DNA, RecA interacts with LexA causing an autocatalytic cleavage which disrupts the DNA-binding part of LexA, leading to derepression of the SOS regulon and eventually DNA repair. In Bacillus velezensis (strain DSM 23117 / BGSC 10A6 / LMG 26770 / FZB42) (Bacillus amyloliquefaciens subsp. plantarum), this protein is LexA repressor.